The primary structure comprises 186 residues: Ribosome-recycling factor (186 aa).

This sequence belongs to the RRF family.

It is found in the cytoplasm. Functionally, responsible for the release of ribosomes from messenger RNA at the termination of protein biosynthesis. May increase the efficiency of translation by recycling ribosomes from one round of translation to another. The chain is Ribosome-recycling factor from Rickettsia africae (strain ESF-5).